Here is a 220-residue protein sequence, read N- to C-terminus: Urease accessory protein UreF (220 aa).

It belongs to the UreF family. UreD, UreF and UreG form a complex that acts as a GTP-hydrolysis-dependent molecular chaperone, activating the urease apoprotein by helping to assemble the nickel containing metallocenter of UreC. The UreE protein probably delivers the nickel.

The protein resides in the cytoplasm. Functionally, required for maturation of urease via the functional incorporation of the urease nickel metallocenter. This Bordetella bronchiseptica (strain ATCC BAA-588 / NCTC 13252 / RB50) (Alcaligenes bronchisepticus) protein is Urease accessory protein UreF.